The sequence spans 326 residues: Hairy/enhancer-of-split related with YRPW motif-like protein (326 aa).

Residues 1–56 (MKRPRAPSGSDGESDGPIDVGQENDLSQMARPLTTPSPSQMQARKKRRGIIEKRRR) are disordered. Positions 42–111 (QARKKRRGII…GGTGFFDARA (70 aa)) are transcriptional repression and interaction with NCOR1 and SIN3A. The bHLH domain maps to 43 to 98 (ARKKRRGIIEKRRRDRINSSLSELRRLVPTAFEKQGSSKLEKAEVLQMTVDHLKML). The 38-residue stretch at 116 to 153 (FRSIGFRECLTEVIRYLGVLEGPSSHADPVRIRLLSHL) folds into the Orange domain. 2 disordered regions span residues 223–260 (HRPA…PPPT) and 272–306 (PIPP…PTGR). Low complexity predominate over residues 292 to 305 (SGSISSPCPSGPTG).

The protein belongs to the HEY family. In terms of assembly, interacts with HES1, HDAC1, NCOR1 and SIN3A. Self-associates. Interacts with GATA4, GATA6, HEY1 and HEY2. Expressed in heart and at lower levels in brain, lung, muscle, ovary and testis.

It localises to the nucleus. Transcriptional repressor which binds preferentially to the canonical E box sequence 5'-CACGTG-3'. Downstream effector of Notch signaling required for cardiovascular development. Specifically required for the Notch-induced endocardial epithelial to mesenchymal transition, which is itself criticial for cardiac valve and septum development. Represses transcription by the cardiac transcriptional activators GATA4 and GATA6. This Mus musculus (Mouse) protein is Hairy/enhancer-of-split related with YRPW motif-like protein (Heyl).